The sequence spans 265 residues: S-adenosylmethionine decarboxylase proenzyme (265 aa).

The active-site Schiff-base intermediate with substrate; via pyruvic acid is the Ser114. Ser114 is subject to Pyruvic acid (Ser); by autocatalysis. His119 serves as the catalytic Proton acceptor; for processing activity. Residue Cys142 is the Proton donor; for catalytic activity of the active site.

This sequence belongs to the prokaryotic AdoMetDC family. Type 2 subfamily. Heterooctamer of four alpha and four beta chains arranged as a tetramer of alpha/beta heterodimers. Pyruvate is required as a cofactor. In terms of processing, is synthesized initially as an inactive proenzyme. Formation of the active enzyme involves a self-maturation process in which the active site pyruvoyl group is generated from an internal serine residue via an autocatalytic post-translational modification. Two non-identical subunits are generated from the proenzyme in this reaction, and the pyruvate is formed at the N-terminus of the alpha chain, which is derived from the carboxyl end of the proenzyme. The post-translation cleavage follows an unusual pathway, termed non-hydrolytic serinolysis, in which the side chain hydroxyl group of the serine supplies its oxygen atom to form the C-terminus of the beta chain, while the remainder of the serine residue undergoes an oxidative deamination to produce ammonia and the pyruvoyl group blocking the N-terminus of the alpha chain.

The catalysed reaction is S-adenosyl-L-methionine + H(+) = S-adenosyl 3-(methylsulfanyl)propylamine + CO2. The protein operates within amine and polyamine biosynthesis; S-adenosylmethioninamine biosynthesis; S-adenosylmethioninamine from S-adenosyl-L-methionine: step 1/1. Functionally, catalyzes the decarboxylation of S-adenosylmethionine to S-adenosylmethioninamine (dcAdoMet), the propylamine donor required for the synthesis of the polyamines spermine and spermidine from the diamine putrescine. The protein is S-adenosylmethionine decarboxylase proenzyme of Buchnera aphidicola subsp. Acyrthosiphon pisum (strain 5A).